The sequence spans 106 residues: Probable NADP-dependent dehydrogenase in aabA 3'region (106 aa).

4-28 (LITGASSGFGWEAAKLCVAKGHRVI) contacts NADP(+).

It belongs to the short-chain dehydrogenases/reductases (SDR) family.

In Dichelobacter nodosus (Bacteroides nodosus), this protein is Probable NADP-dependent dehydrogenase in aabA 3'region.